The following is a 238-amino-acid chain: Ribonuclease PH (238 aa).

Phosphate contacts are provided by residues Arg86 and 124-126; that span reads GTR.

The protein belongs to the RNase PH family. As to quaternary structure, homohexameric ring arranged as a trimer of dimers.

The enzyme catalyses tRNA(n+1) + phosphate = tRNA(n) + a ribonucleoside 5'-diphosphate. In terms of biological role, phosphorolytic 3'-5' exoribonuclease that plays an important role in tRNA 3'-end maturation. Removes nucleotide residues following the 3'-CCA terminus of tRNAs; can also add nucleotides to the ends of RNA molecules by using nucleoside diphosphates as substrates, but this may not be physiologically important. Probably plays a role in initiation of 16S rRNA degradation (leading to ribosome degradation) during starvation. The chain is Ribonuclease PH from Halorhodospira halophila (strain DSM 244 / SL1) (Ectothiorhodospira halophila (strain DSM 244 / SL1)).